The primary structure comprises 206 residues: Small ribosomal subunit protein uS4 (206 aa).

Residues 18–46 (NIWGRPKSPVNRREYGPGQHGQRRKQKMS) are disordered. Positions 94–154 (RRLDAVVYRA…EKSRQMAALL (61 aa)) constitute an S4 RNA-binding domain.

Belongs to the universal ribosomal protein uS4 family. As to quaternary structure, part of the 30S ribosomal subunit. Contacts protein S5. The interaction surface between S4 and S5 is involved in control of translational fidelity.

One of the primary rRNA binding proteins, it binds directly to 16S rRNA where it nucleates assembly of the body of the 30S subunit. In terms of biological role, with S5 and S12 plays an important role in translational accuracy. The sequence is that of Small ribosomal subunit protein uS4 from Dinoroseobacter shibae (strain DSM 16493 / NCIMB 14021 / DFL 12).